A 100-amino-acid chain; its full sequence is MHLNPAEKEKLQIFLASELLLRRKARGLKLNYPEAVAIITSFIMEGARDGKTVAMLMEEGKHVLTRDDVMEGVPEMIDDIQAEATFPDGTKLVTVHNPIS.

It belongs to the urease gamma subunit family. As to quaternary structure, heterotrimer of UreA (gamma), UreB (beta) and UreC (alpha) subunits. Three heterotrimers associate to form the active enzyme. Post-translationally, although not discussed in the published references, Met-1 is represented in the submitted PDB entries as being modified by either a formyl, a carboxyl, or an acetyl group. The N-terminal is probably N-(dihydroxymethyl)methionine, the hydrated form of N-formylmethionine.

It is found in the cytoplasm. The enzyme catalyses urea + 2 H2O + H(+) = hydrogencarbonate + 2 NH4(+). Its pathway is nitrogen metabolism; urea degradation; CO(2) and NH(3) from urea (urease route): step 1/1. This is Urease subunit gamma from Sporosarcina pasteurii (Bacillus pasteurii).